A 396-amino-acid chain; its full sequence is MEAVKEAVRKIKSLVIPHADEKDNGIVFEIKLNETDQRVEKWGLDPSLDFFEVTGNCNLGRPNSEGSNQSLMGSVTIRNIFNPKLDDLLSKIEYVRFLEAVKKPRNRTFKTSFFNSRKLSPVFTGGPGYEDLVPPMFVGRDCLKATITENLTRQRELTYGVMFEEIITRDENRRISENGLLLSPDGGISINGPPTTLSGTGIDHIATLQANITRDNTKLVNGAVVGEKNIFQVDQGLGIGNNFPLFNRHQLSLTSFIQLKQVEEGSDKPQPPVLVLHGRYGGCIGDLPSYDVFALGGPNSVRGYSMGELGAAKNILELGAEIRIPVKNTHVYAFAEHGNDLGSSKDVKGNPTGLYRKMGHGSSYGLGVKLGMVRAEYTVRHNRGTGALFLRFGERY.

Residues M1 to D23 are Chloroplast intermembrane-facing. Residues N24–L32 form a beta stranded membrane-spanning segment. Residues N33–D87 are Cytoplasmic-facing. The chain crosses the membrane as a beta stranded span at residues L88–R96. Topologically, residues F97–R140 are chloroplast intermembrane. A beta stranded membrane pass occupies residues D141–T148. At E149 to E156 the chain is on the cytoplasmic side. The beta stranded transmembrane segment at L157–E164 threads the bilayer. Residues E165–P271 lie on the Chloroplast intermembrane side of the membrane. A beta stranded membrane pass occupies residues P272 to Y280. The Cytoplasmic portion of the chain corresponds to G281–V292. A beta stranded membrane pass occupies residues F293 to V301. Over R302–S363 the chain is Chloroplast intermembrane. A beta stranded transmembrane segment spans residues Y364 to L370. Over G371–G384 the chain is Cytoplasmic. A beta stranded membrane pass occupies residues T385–F392. Residues G393–Y396 lie on the Chloroplast intermembrane side of the membrane.

Belongs to the TOC75 family. Part of the TOC core complex that includes a protein for the specific recognition of transit peptides surrounded by a ring composed of four proteins forming translocation channels, and four to five GTP-binding proteins providing energy. This core complex can interact with components of the TIC complex to form a larger import complex. Chloroplastic protein precursors also interacts with these complexes. In terms of tissue distribution, expressed ubiquitously at low levels.

It is found in the plastid. The protein localises to the chloroplast outer membrane. In terms of biological role, mediates the insertion of proteins targeted to the outer membrane of chloroplasts. Required for the import of protein precursors into chloroplasts. Forms the voltage-dependent preprotein translocation channels (hydrophilic beta barrel) of the TOC complex in the chloroplastic outer membrane. Required for etioplast formation and/or etioplast-chloroplast transition during deetiolation. The polypeptide is Protein TOC75-4, chloroplastic (TOC75-4) (Arabidopsis thaliana (Mouse-ear cress)).